A 145-amino-acid polypeptide reads, in one-letter code: D-aminoacyl-tRNA deacylase (145 aa).

The Gly-cisPro motif, important for rejection of L-amino acids motif lies at 137–138 (GP).

It belongs to the DTD family. Homodimer.

It is found in the cytoplasm. It carries out the reaction glycyl-tRNA(Ala) + H2O = tRNA(Ala) + glycine + H(+). The catalysed reaction is a D-aminoacyl-tRNA + H2O = a tRNA + a D-alpha-amino acid + H(+). An aminoacyl-tRNA editing enzyme that deacylates mischarged D-aminoacyl-tRNAs. Also deacylates mischarged glycyl-tRNA(Ala), protecting cells against glycine mischarging by AlaRS. Acts via tRNA-based rather than protein-based catalysis; rejects L-amino acids rather than detecting D-amino acids in the active site. By recycling D-aminoacyl-tRNA to D-amino acids and free tRNA molecules, this enzyme counteracts the toxicity associated with the formation of D-aminoacyl-tRNA entities in vivo and helps enforce protein L-homochirality. The protein is D-aminoacyl-tRNA deacylase of Idiomarina loihiensis (strain ATCC BAA-735 / DSM 15497 / L2-TR).